We begin with the raw amino-acid sequence, 115 residues long: Large ribosomal subunit protein bL20 (115 aa).

The protein belongs to the bacterial ribosomal protein bL20 family.

Functionally, binds directly to 23S ribosomal RNA and is necessary for the in vitro assembly process of the 50S ribosomal subunit. It is not involved in the protein synthesizing functions of that subunit. This Synechococcus sp. (strain WH7803) protein is Large ribosomal subunit protein bL20.